The primary structure comprises 341 residues: Protein huluwa (341 aa).

Topologically, residues 1-36 (MVTLSPAYLPSDGGTQAASAAPSVEENWVVQPSLTL) are extracellular. The chain crosses the membrane as a helical span at residues 37–57 (LVLLLVPCVLLLFFLNCFLLF). Over 58-341 (HRLPAFSLRK…PMMCSKQYWI (284 aa)) the chain is Cytoplasmic. The VPPNSP motif signature appears at 206–211 (VPPNTP).

The protein belongs to the huluwa family. As to quaternary structure, interacts with axin1; leading to promote the tankyrase-mediated degradation of axin. Interacts with axin2; leading to promote the tankyrase-mediated degradation of axin.

It localises to the cell membrane. In terms of biological role, key maternal determinant of the dorsal organizer and body axis formation in vertebrates that acts by promoting stabilization of beta-catenin (ctnnb1). Localizes on the plasma membrane of the future dorsal blastomeres in early blastulas and binds to and promotes the tankyrase-mediated degradation of axin (axin1 and axin2). Axin degradation results in stabilization and nuclear translocation of beta-catenin (ctnnb1) for activating organizer-specific target gene expression. This Xenopus laevis (African clawed frog) protein is Protein huluwa.